A 347-amino-acid polypeptide reads, in one-letter code: Quinolinate synthase (347 aa).

Iminosuccinate is bound by residues His47 and Ser68. Cys113 lines the [4Fe-4S] cluster pocket. Iminosuccinate is bound by residues 139-141 (YAN) and Ser156. Cys200 contacts [4Fe-4S] cluster. Iminosuccinate contacts are provided by residues 226-228 (HPE) and Thr243. Cys297 contacts [4Fe-4S] cluster.

This sequence belongs to the quinolinate synthase family. Type 1 subfamily. The cofactor is [4Fe-4S] cluster.

It localises to the cytoplasm. The enzyme catalyses iminosuccinate + dihydroxyacetone phosphate = quinolinate + phosphate + 2 H2O + H(+). It participates in cofactor biosynthesis; NAD(+) biosynthesis; quinolinate from iminoaspartate: step 1/1. Catalyzes the condensation of iminoaspartate with dihydroxyacetone phosphate to form quinolinate. In Salmonella typhi, this protein is Quinolinate synthase.